The sequence spans 408 residues: Serine/threonine-protein kinase UCNL (408 aa).

Residues 21 to 341 (IKALKILGKG…AAEIKELAFF (321 aa)) enclose the Protein kinase domain. Residues 27–35 (LGKGATGTV) and Lys-54 contribute to the ATP site. Residue Asp-152 is the Proton acceptor of the active site. An AGC-kinase C-terminal domain is found at 342–408 (AGVRWDLLTE…CRKNDPFIEF (67 aa)).

This sequence belongs to the protein kinase superfamily. AGC Ser/Thr protein kinase family. Expressed in the epidermis and cortex of the transition zone of the root apex. Expressed in rosette leaves, stems, flowers and siliques.

It localises to the cytoplasm. It is found in the nucleus. The enzyme catalyses L-seryl-[protein] + ATP = O-phospho-L-seryl-[protein] + ADP + H(+). It carries out the reaction L-threonyl-[protein] + ATP = O-phospho-L-threonyl-[protein] + ADP + H(+). Regulates planar ovule integument development. This chain is Serine/threonine-protein kinase UCNL, found in Arabidopsis thaliana (Mouse-ear cress).